Reading from the N-terminus, the 281-residue chain is 3-mercaptopyruvate sulfurtransferase (281 aa).

2 consecutive Rhodanese domains span residues 17–135 and 165–278; these read DDPE…LLEE and HENT…LPVE. R179 contacts substrate. Catalysis depends on C238, which acts as the Cysteine persulfide intermediate. The interval 238-244 is substrate specificity; sequence CGSGVTA.

Its subcellular location is the cytoplasm. The enzyme catalyses 2-oxo-3-sulfanylpropanoate + [thioredoxin]-dithiol = [thioredoxin]-disulfide + hydrogen sulfide + pyruvate + H(+). In terms of biological role, catalyzes the transfer of sulfur from 3-mercaptopyruvate to a thiol-containing acceptor to form an intramolecular disulfide releasing hydrogen sulfide and pyruvate. This is 3-mercaptopyruvate sulfurtransferase (sseA) from Escherichia coli O157:H7.